The chain runs to 291 residues: 3-methylcatechol 2,3-dioxygenase (291 aa).

VOC domains are found at residues 5–119 and 143–264; these read RLGY…IYYG and GLGH…YGWG. Positions 146, 210, and 260 each coordinate Fe cation.

The protein belongs to the extradiol ring-cleavage dioxygenase family. In terms of assembly, homooctamer. The cofactor is Fe(2+).

It catalyses the reaction 3-methylcatechol + O2 = 2-hydroxy-6-oxo-2,4-heptadienoate + H(+). It participates in xenobiotic degradation; toluene degradation. This Pseudomonas putida (strain ATCC 700007 / DSM 6899 / JCM 31910 / BCRC 17059 / LMG 24140 / F1) protein is 3-methylcatechol 2,3-dioxygenase (todE).